The primary structure comprises 587 residues: MFS-type transporter opaD (587 aa).

A run of 9 helical transmembrane segments spans residues 87 to 107 (VAIM…NTIL), 124 to 146 (MGWY…GKLL), 153 to 173 (WVYI…GVSP), 184 to 204 (ISGT…TIIV), 214 to 234 (GILS…GGAF), 242 to 262 (WCFY…LLLF), 284 to 304 (IIGL…LQWG), 315 to 335 (IIAL…VEYW), and 357 to 377 (LFTF…PIWF). N382 carries an N-linked (GlcNAc...) asparagine glycan. The next 5 helical transmembrane spans lie at 393–413 (IPLI…VTTL), 414–434 (GYYI…AGLL), 447–467 (IGFQ…PLVV), 483–503 (LVTL…QSVF), and 554–574 (VYLV…PIRW).

It belongs to the major facilitator superfamily. TCR/Tet family.

The protein resides in the membrane. Its function is as follows. MFS-type transporter; part of the gene cluster that mediates the biosynthesis of oxepinamides, derivatives of anthranilyl-containing tripeptides that share an oxepin ring and a fused pyrimidinone moiety. This Aspergillus ustus protein is MFS-type transporter opaD.